The sequence spans 266 residues: UPF0354 protein lmo1608 (266 aa).

It belongs to the UPF0354 family.

In Listeria monocytogenes serovar 1/2a (strain ATCC BAA-679 / EGD-e), this protein is UPF0354 protein lmo1608.